The primary structure comprises 375 residues: Chaperone protein DnaJ (375 aa).

Residues aspartate 5–glycine 70 form the J domain. Residues glycine 134–glutamine 216 form a CR-type zinc finger. The Zn(2+) site is built by cysteine 147, cysteine 150, cysteine 164, cysteine 167, cysteine 190, cysteine 193, cysteine 204, and cysteine 207. CXXCXGXG motif repeat units lie at residues cysteine 147–glycine 154, cysteine 164–glycine 171, cysteine 190–glycine 197, and cysteine 204–glycine 211.

This sequence belongs to the DnaJ family. In terms of assembly, homodimer. The cofactor is Zn(2+).

Its subcellular location is the cytoplasm. Functionally, participates actively in the response to hyperosmotic and heat shock by preventing the aggregation of stress-denatured proteins and by disaggregating proteins, also in an autonomous, DnaK-independent fashion. Unfolded proteins bind initially to DnaJ; upon interaction with the DnaJ-bound protein, DnaK hydrolyzes its bound ATP, resulting in the formation of a stable complex. GrpE releases ADP from DnaK; ATP binding to DnaK triggers the release of the substrate protein, thus completing the reaction cycle. Several rounds of ATP-dependent interactions between DnaJ, DnaK and GrpE are required for fully efficient folding. Also involved, together with DnaK and GrpE, in the DNA replication of plasmids through activation of initiation proteins. In Clostridium tetani (strain Massachusetts / E88), this protein is Chaperone protein DnaJ.